The primary structure comprises 228 residues: Growth arrest-specific protein 1 homolog (228 aa).

The first 17 residues, Met-1–Ala-17, serve as a signal peptide directing secretion. N-linked (GlcNAc...) asparagine glycans are attached at residues Asn-143 and Asn-156. Asp-205 is lipidated: GPI-anchor amidated aspartate. Positions Ser-206–Phe-228 are cleaved as a propeptide — removed in mature form.

In terms of tissue distribution, pharynx muscle cells from its early formation, in the two-fold embryo, until the adult stage.

It is found in the cell membrane. Role in pharynx function or development. In Caenorhabditis elegans, this protein is Growth arrest-specific protein 1 homolog (phg-1).